A 156-amino-acid polypeptide reads, in one-letter code: Small ribosomal subunit protein uS7 (156 aa).

It belongs to the universal ribosomal protein uS7 family. As to quaternary structure, part of the 30S ribosomal subunit. Contacts proteins S9 and S11.

Its function is as follows. One of the primary rRNA binding proteins, it binds directly to 16S rRNA where it nucleates assembly of the head domain of the 30S subunit. Is located at the subunit interface close to the decoding center, probably blocks exit of the E-site tRNA. The polypeptide is Small ribosomal subunit protein uS7 (Staphylococcus saprophyticus subsp. saprophyticus (strain ATCC 15305 / DSM 20229 / NCIMB 8711 / NCTC 7292 / S-41)).